The following is a 225-amino-acid chain: PKHD-type hydroxylase HEAR3399 (225 aa).

Positions 77-177 (RYMPPLFNRY…RVCSFFWLQS (101 aa)) constitute a Fe2OG dioxygenase domain. H95, D97, and H158 together coordinate Fe cation. R168 is a binding site for 2-oxoglutarate.

It depends on Fe(2+) as a cofactor. L-ascorbate is required as a cofactor.

This Herminiimonas arsenicoxydans protein is PKHD-type hydroxylase HEAR3399.